The primary structure comprises 128 residues: Large ribosomal subunit protein uL22 (128 aa).

This sequence belongs to the universal ribosomal protein uL22 family. In terms of assembly, part of the 50S ribosomal subunit.

In terms of biological role, this protein binds specifically to 23S rRNA; its binding is stimulated by other ribosomal proteins, e.g. L4, L17, and L20. It is important during the early stages of 50S assembly. It makes multiple contacts with different domains of the 23S rRNA in the assembled 50S subunit and ribosome. Functionally, the globular domain of the protein is located near the polypeptide exit tunnel on the outside of the subunit, while an extended beta-hairpin is found that lines the wall of the exit tunnel in the center of the 70S ribosome. The chain is Large ribosomal subunit protein uL22 from Rhodopseudomonas palustris (strain BisB18).